The chain runs to 274 residues: Putative ABC transporter ATP-binding protein alr3946 (274 aa).

The region spanning 6–242 is the ABC transporter domain; it reads LTFEQVYYTY…REILDSIELG (237 aa). 40-47 is a binding site for ATP; the sequence is GRNGCGKT.

This sequence belongs to the ABC transporter superfamily.

It localises to the cell inner membrane. Probably part of an ABC transporter complex. Responsible for energy coupling to the transport system. The protein is Putative ABC transporter ATP-binding protein alr3946 of Nostoc sp. (strain PCC 7120 / SAG 25.82 / UTEX 2576).